The following is a 535-amino-acid chain: Suppressor of cytokine signaling 6 (535 aa).

Positions 80–89 (RLSAKQKSKG) are enriched in basic residues. Residues 80–105 (RLSAKQKSKGKAGTPSGSSADEDTFS) form a disordered region. The region spanning 384 to 491 (WYWGPITRWE…TYPVRLTNPV (108 aa)) is the SH2 domain. The 50-residue stretch at 486–535 (RLTNPVSRFMQVRSLQYLCRFVIRQYTRIDLIQKLPLPNKMKDYLQEKHY) folds into the SOCS box domain.

As to quaternary structure, interacts with RBCK1. Interacts with phosphorylated IRS4. Interacts with KIT (phosphorylated). Interacts with PIM3.

It participates in protein modification; protein ubiquitination. Functionally, SOCS family proteins form part of a classical negative feedback system that regulates cytokine signal transduction. May be a substrate recognition component of a SCF-like ECS (Elongin BC-CUL2/5-SOCS-box protein) E3 ubiquitin-protein ligase complex which mediates the ubiquitination and subsequent proteasomal degradation of target proteins. Regulates KIT degradation by ubiquitination of the tyrosine-phosphorylated receptor. The protein is Suppressor of cytokine signaling 6 (SOCS6) of Pongo abelii (Sumatran orangutan).